A 690-amino-acid chain; its full sequence is Proprotein convertase subtilisin/kexin type 9 (690 aa).

The N-terminal stretch at 1-28 is a signal peptide; it reads MGTVRSRRLWWPLPLLLLLLRGPAGARA. Positions 29-150 are excised as a propeptide; sequence QEDDDGDYEE…IEEDSYVFAQ (122 aa). Tyr-36 carries the post-translational modification Sulfotyrosine. Phosphoserine is present on Ser-45. The region spanning 75-147 is the Inhibitor I9 domain; the sequence is TYVVVLKEET…VDYIEEDSYV (73 aa). In terms of domain architecture, Peptidase S8 spans 153 to 459; that stretch reads PWNLERITPA…GWQLFCRTVW (307 aa). Catalysis depends on charge relay system residues Asp-184 and His-224. Cystine bridges form between Cys-221-Cys-253 and Cys-321-Cys-356. The Charge relay system role is filled by Ser-384. The C-terminal domain stretch occupies residues 448–690; sequence GAGWQLFCRT…HLAQASQELQ (243 aa). Cystine bridges form between Cys-455–Cys-525, Cys-475–Cys-524, and Cys-484–Cys-507. N-linked (GlcNAc...) asparagine glycosylation is present at Asn-531. Intrachain disulfides connect Cys-532–Cys-599, Cys-550–Cys-598, Cys-560–Cys-586, Cys-606–Cys-677, Cys-624–Cys-676, and Cys-633–Cys-652. Ser-686 carries the post-translational modification Phosphoserine.

It belongs to the peptidase S8 family. In terms of assembly, monomer. Can self-associate to form dimers and higher multimers which may have increased LDLR degrading activity. The precursor protein but not the mature protein may form multimers. Interacts with APOB, VLDLR, LRP8/APOER2 and BACE1. The full-length immature form (pro-PCSK9) interacts with SCNN1A, SCNN1B and SCNN1G. The pro-PCSK9 form (via C-terminal domain) interacts with LDLR. Interacts (via the C-terminal domain) with ANXA2 (via repeat Annexin 1); the interaction inhibits the degradation of LDLR. Ca(2+) is required as a cofactor. In terms of processing, cleavage by furin and PCSK5 generates a truncated inactive protein that is unable to induce LDLR degradation. Post-translationally, undergoes autocatalytic cleavage in the endoplasmic reticulum to release the propeptide from the N-terminus and the cleavage of the propeptide is strictly required for its maturation and activation. The cleaved propeptide however remains associated with the catalytic domain through non-covalent interactions, preventing potential substrates from accessing its active site. As a result, it is secreted from cells as a propeptide-containing, enzymatically inactive protein. Phosphorylation protects the propeptide against proteolysis.

It localises to the cytoplasm. Its subcellular location is the secreted. The protein resides in the endosome. It is found in the lysosome. The protein localises to the cell surface. It localises to the endoplasmic reticulum. Its subcellular location is the golgi apparatus. With respect to regulation, its proteolytic activity is autoinhibited by the non-covalent binding of the propeptide to the catalytic domain. Inhibited by EGTA. In terms of biological role, crucial player in the regulation of plasma cholesterol homeostasis. Binds to low-density lipid receptor family members: low density lipoprotein receptor (LDLR), very low density lipoprotein receptor (VLDLR), apolipoprotein E receptor (LRP1/APOER) and apolipoprotein receptor 2 (LRP8/APOER2), and promotes their degradation in intracellular acidic compartments. Acts via a non-proteolytic mechanism to enhance the degradation of the hepatic LDLR through a clathrin LDLRAP1/ARH-mediated pathway. May prevent the recycling of LDLR from endosomes to the cell surface or direct it to lysosomes for degradation. Can induce ubiquitination of LDLR leading to its subsequent degradation. Inhibits intracellular degradation of APOB via the autophagosome/lysosome pathway in a LDLR-independent manner. Involved in the disposal of non-acetylated intermediates of BACE1 in the early secretory pathway. Inhibits epithelial Na(+) channel (ENaC)-mediated Na(+) absorption by reducing ENaC surface expression primarily by increasing its proteasomal degradation. Regulates neuronal apoptosis via modulation of LRP8/APOER2 levels and related anti-apoptotic signaling pathways. The chain is Proprotein convertase subtilisin/kexin type 9 (PCSK9) from Ateles geoffroyi (Black-handed spider monkey).